Reading from the N-terminus, the 285-residue chain is Protease HtpX homolog (285 aa).

Transmembrane regions (helical) follow at residues 7–27 (TAML…MIGG) and 30–50 (GMTI…WFSD). Histidine 131 contacts Zn(2+). Residue glutamate 132 is part of the active site. A Zn(2+)-binding site is contributed by histidine 135. 2 helical membrane passes run 146-166 (ITAT…FFGG) and 177-197 (IAGI…QMAI). Position 202 (glutamate 202) interacts with Zn(2+).

The protein belongs to the peptidase M48B family. Zn(2+) is required as a cofactor.

The protein resides in the cell inner membrane. The polypeptide is Protease HtpX homolog (Burkholderia lata (strain ATCC 17760 / DSM 23089 / LMG 22485 / NCIMB 9086 / R18194 / 383)).